Consider the following 134-residue polypeptide: Translation initiation factor 2 subunit beta (134 aa).

It belongs to the eIF-2-beta/eIF-5 family. In terms of assembly, heterotrimer composed of an alpha, a beta and a gamma chain.

In terms of biological role, eIF-2 functions in the early steps of protein synthesis by forming a ternary complex with GTP and initiator tRNA. The chain is Translation initiation factor 2 subunit beta from Pyrobaculum aerophilum (strain ATCC 51768 / DSM 7523 / JCM 9630 / CIP 104966 / NBRC 100827 / IM2).